We begin with the raw amino-acid sequence, 184 residues long: Secreted protein B (184 aa).

The signal sequence occupies residues 1-19 (MRFILVLVLILGLVSSSFG). Asparagine 129 is a glycosylation site (N-linked (GlcNAc...) asparagine). The short motif at 164 to 166 (RGD) is the Cell attachment site element.

It belongs to the Sct family.

It is found in the secreted. The protein is Secreted protein B (29C) of Dictyostelium discoideum (Social amoeba).